Consider the following 364-residue polypeptide: 4-hydroxy-3-methylbut-2-en-1-yl diphosphate synthase (flavodoxin) (364 aa).

[4Fe-4S] cluster contacts are provided by Cys-268, Cys-271, Cys-303, and Glu-310.

The protein belongs to the IspG family. The cofactor is [4Fe-4S] cluster.

The enzyme catalyses (2E)-4-hydroxy-3-methylbut-2-enyl diphosphate + oxidized [flavodoxin] + H2O + 2 H(+) = 2-C-methyl-D-erythritol 2,4-cyclic diphosphate + reduced [flavodoxin]. It functions in the pathway isoprenoid biosynthesis; isopentenyl diphosphate biosynthesis via DXP pathway; isopentenyl diphosphate from 1-deoxy-D-xylulose 5-phosphate: step 5/6. Converts 2C-methyl-D-erythritol 2,4-cyclodiphosphate (ME-2,4cPP) into 1-hydroxy-2-methyl-2-(E)-butenyl 4-diphosphate. This Anoxybacillus flavithermus (strain DSM 21510 / WK1) protein is 4-hydroxy-3-methylbut-2-en-1-yl diphosphate synthase (flavodoxin).